Here is a 466-residue protein sequence, read N- to C-terminus: MMHLILSCSYLISMDGYYNEASEEPSSSSSSGSLARSLFHEYRQSVIPLQNGHVPSMAFMNNLPYVEIRPQESQRLAFNDTQRLFYQMKIEASLREWFPEDFNRKSSPANSDYLRPPHYPSSSSSSLSPNNISEYSSLLFPLIPKPSTTTEAVNVPVLPPLAPINMIHPQHQEPLFRNRQREEEAMTQAILAVLTGPSSPPSTSSSPQRKGRATAFKRYYSMISDRGRAPLPSVRKQSMMTRAMSFYNRLNINQRERFTRENATTHGEGSGGSGGGGRYTSGPSATQLQHMISERKRREKLNESFQALRSLLPPGTKKDKASVLSIAREQLSSLQGEISKLLERNREVEAKLAGEREIENDLRPEERFNVRIRHIPESTSRERTLDLRVVLRGDIIRVDDLMIRLLEFLKQINNVSLVSIEARTLARAEGDTSIVLVISLRLKIEGEWDESAFQEAVRRVVADLAH.

Disordered regions lie at residues 108-129 (PANSDYLRPPHYPSSSSSSLSP), 194-213 (LTGPSSPPSTSSSPQRKGRA), and 260-289 (RENATTHGEGSGGSGGGGRYTSGPSATQLQ). The span at 120–129 (PSSSSSSLSP) shows a compositional bias: low complexity. Over residues 268-279 (EGSGGSGGGGRY) the composition is skewed to gly residues. One can recognise a bHLH domain in the interval 285-334 (ATQLQHMISERKRREKLNESFQALRSLLPPGTKKDKASVLSIAREQLSSL).

In terms of assembly, homodimer.

It localises to the nucleus. The protein is Putative transcription factor bHLH041 (BHLH41) of Arabidopsis thaliana (Mouse-ear cress).